The following is a 187-amino-acid chain: Superoxide dismutase [Cu-Zn] (187 aa).

An N-terminal signal peptide occupies residues 1-21 (MSLLPTGTLILLVLFILVLIT). The Cu cation site is built by H76, H78, and H93. An intrachain disulfide couples C87 to C176. The Zn(2+) site is built by H93, H101, H110, and D113. H150 is a binding site for Cu cation.

Belongs to the Cu-Zn superoxide dismutase family. The cofactor is Cu cation. It depends on Zn(2+) as a cofactor.

It carries out the reaction 2 superoxide + 2 H(+) = H2O2 + O2. Functionally, destroys radicals which are normally produced within the cells and which are toxic to biological systems. The sequence is that of Superoxide dismutase [Cu-Zn] from Chlorella (PBCV-1).